The primary structure comprises 175 residues: General odorant-binding protein 84a (175 aa).

A signal peptide spans 1 to 24 (MYSALVRACAVIAFLILSPNCARA). Disulfide bonds link cysteine 103–cysteine 151 and cysteine 140–cysteine 160.

In terms of tissue distribution, present only in a small number of hairs scattered over the surface of the funiculus.

The protein localises to the secreted. This chain is General odorant-binding protein 84a (Obp84a), found in Drosophila melanogaster (Fruit fly).